Consider the following 291-residue polypeptide: MSDTTKPPMARKMGLTAERVHGERRVEDPSRSVMTPPKEELRANVKDLSFWYGEFQALHAVNLPIARNKVTALIGASGCGKSTLLRCFNRMHDLYPGNRYGGEIDLQPEGQNIIAPGIDPILIRLRIGMVFQKPNPFPKTIYENVASGLRIRGIRSRAVLDERVEVSLRQAALWDEVKDRLHQSAYGLSGGQQQRLCIARTLAPNPEIILFDEPTSALDPIATAKIEDLFTDLRDDYTIVIVTHNMQQAARISDYLAFMHLGKMIEFGPTDECFVKPKHAMTEEYITGRFG.

In terms of domain architecture, ABC transporter spans 43-286; it reads ANVKDLSFWY…PKHAMTEEYI (244 aa). 75-82 serves as a coordination point for ATP; it reads GASGCGKS.

It belongs to the ABC transporter superfamily. Phosphate importer (TC 3.A.1.7) family. In terms of assembly, the complex is composed of two ATP-binding proteins (PstB), two transmembrane proteins (PstC and PstA) and a solute-binding protein (PstS).

It localises to the cell inner membrane. It carries out the reaction phosphate(out) + ATP + H2O = ADP + 2 phosphate(in) + H(+). Its function is as follows. Part of the ABC transporter complex PstSACB involved in phosphate import. Responsible for energy coupling to the transport system. The sequence is that of Phosphate import ATP-binding protein PstB from Alcaligenes faecalis.